Consider the following 302-residue polypeptide: Putative T-box protein 34 (302 aa).

Positions 5–180 (IVNEHKYREL…KMNLAPGSSQ (176 aa)) form a DNA-binding region, T-box.

It is found in the nucleus. The polypeptide is Putative T-box protein 34 (tbx-34) (Caenorhabditis elegans).